Reading from the N-terminus, the 283-residue chain is Acetylglutamate kinase (283 aa).

Substrate-binding positions include 63–64, Arg85, and Asn178; that span reads GG.

The protein belongs to the acetylglutamate kinase family. ArgB subfamily.

Its subcellular location is the cytoplasm. The catalysed reaction is N-acetyl-L-glutamate + ATP = N-acetyl-L-glutamyl 5-phosphate + ADP. Its pathway is amino-acid biosynthesis; L-arginine biosynthesis; N(2)-acetyl-L-ornithine from L-glutamate: step 2/4. Its function is as follows. Catalyzes the ATP-dependent phosphorylation of N-acetyl-L-glutamate. This Prochlorococcus marinus (strain MIT 9515) protein is Acetylglutamate kinase.